Reading from the N-terminus, the 610-residue chain is ATP-dependent zinc metalloprotease FtsH (610 aa).

The Cytoplasmic segment spans residues 1-5; the sequence is MNRSN. Residues 6–26 traverse the membrane as a helical segment; the sequence is IWNLLFTILIIVTLFWLARFF. Residues 27–107 lie on the Periplasmic side of the membrane; sequence YVENSPVSKL…SGERSGSSSF (81 aa). Residues 108 to 128 form a helical membrane-spanning segment; it reads WINVLGTLIPTILFIVVWLFI. Residues 129–610 lie on the Cytoplasmic side of the membrane; sequence MRSLSGRNNQ…LSEEFEKVVE (482 aa). Residues G164, 204–208, L209, H343, and E371 each bind ATP; that span reads GTGKT. A Zn(2+)-binding site is contributed by H423. E424 is a catalytic residue. The Zn(2+) site is built by H427 and D500.

In the central section; belongs to the AAA ATPase family. The protein in the C-terminal section; belongs to the peptidase M41 family. In terms of assembly, the isolated ADP-bound cytosolic domain forms a 6-fold symmetric protease disk and a 2-fold symmetric AAA ATPase ring. In the absence of nucleotide the AAA ATPase ring also forms symmetric hexamers. Zn(2+) is required as a cofactor.

The protein localises to the cell inner membrane. Its function is as follows. Acts as a processive, ATP-dependent zinc metallopeptidase for both cytoplasmic and membrane proteins. Plays a role in the quality control of integral membrane proteins. This chain is ATP-dependent zinc metalloprotease FtsH, found in Thermotoga maritima (strain ATCC 43589 / DSM 3109 / JCM 10099 / NBRC 100826 / MSB8).